The primary structure comprises 3767 residues: Transmembrane cell adhesion receptor mua-3 (3767 aa).

Positions 1 to 24 are cleaved as a signal peptide; the sequence is MQAGISIFFLFLHIPIFFVNCSNS. Residues 25–3417 lie on the Extracellular side of the membrane; it reads TSCVAREEFQ…CQVAPSNASL (3393 aa). The LDL-receptor class A 1 domain occupies 26–63; it reads SCVAREEFQCKMDDSCISMKKWQDGVDDCYDGSDEVCL. Intrachain disulfides connect C27/C41, C35/C54, C62/C76, C69/C89, C97/C110, C104/C123, C131/C144, C138/C157, C165/C179, and C172/C192. 3 consecutive LDL-receptor class A domains span residues 96-132, 133-166, and 167-209; these read GCPA…EPCA, QNQF…EECT, and TSQF…ANCT. Residues N201 and N207 are each glycosylated (N-linked (GlcNAc...) asparagine). 17 EGF-like domains span residues 225 to 268, 375 to 416, 418 to 466, 468 to 517, 519 to 566, 614 to 663, 665 to 713, 714 to 760, 762 to 810, 816 to 860, 861 to 908, 910 to 961, 963 to 1012, 1029 to 1070, 1071 to 1118, 1120 to 1168, and 1170 to 1219; these read KLKF…DKCI, NRDD…GTCR, LIDE…RKCR, LINE…RNCT, AINE…RKCV, RANP…RKCV, AVDE…RSCK, KADM…RVCR, VVNE…KNCV, DPPE…GRCV, VINE…RICR, RVNE…RRCI, AVNE…RICT, TDDG…GSCR, VYSA…RICK, LINE…RQCT, and SNNE…RVCT. Cystine bridges form between C229/C243, C235/C252, C254/C267, C381/C392, C386/C402, C404/C415, C422/C435, C429/C444, C446/C465, C472/C486, C480/C495, C497/C516, C523/C536, C530/C545, C547/C565, C618/C632, C626/C642, C644/C662, C669/C682, C676/C691, C693/C712, C718/C729, C723/C738, C740/C759, C766/C779, C773/C788, C790/C809, C820/C836, C828/C845, C847/C859, C865/C879, C873/C888, C890/C907, C914/C930, C924/C939, C941/C960, C967/C981, C975/C990, C992/C1011, C1033/C1046, C1040/C1055, C1057/C1069, C1075/C1087, C1081/C1096, C1098/C1117, C1124/C1137, C1131/C1146, C1148/C1167, C1174/C1188, C1182/C1197, and C1199/C1218. Residue N383 is glycosylated (N-linked (GlcNAc...) asparagine). N-linked (GlcNAc...) asparagine glycosylation is present at N515. Positions 1230 to 1406 constitute a VWFA domain; sequence DLVFLIDGSG…DLDTRLRSMI (177 aa). N1350 is a glycosylation site (N-linked (GlcNAc...) asparagine). EGF-like domains lie at 1421-1466, 1466-1510, 1521-1562, 1563-1608, 1608-1656, 1658-1706, 1708-1755, 1759-1807, 1809-1860, 1862-1911, 1913-1961, 1963-2011, 2014-2062, 2068-2112, 2113-2160, 2162-2208, 2210-2258, 2260-2308, 2310-2358, 2360-2408, 2409-2455, 2456-2504, 2513-2563, 2565-2616, 2618-2666, 2668-2714, 2716-2763, 2763-2811, and 2833-2872; these read SEDV…RVCG, GGDL…GFCV, HDAN…GQCA, YPGS…DICL, LKNE…RVCV, LQNE…MVCK, LVNE…RRCE, TNDK…RLCI, VIPE…RLCK, LQNE…RKCK, LINE…RRCL, RINE…RICR, LVDE…RLCQ, PPPE…GSCS, IINE…RMCK, MVNE…RICK, LTNE…RACR, LVNE…RVCL, FINE…RVCV, LVDE…RVCS, APEV…RVCV, RNNA…RVCE, PRHP…RLCV, TEPV…RICK, LINE…RICS, SVNE…HRCS, MINE…RICR, RLNE…RICI, and REFP…GKCQ. 66 disulfides stabilise this stretch: C1425–C1441, C1433–C1450, C1452–C1465, C1470–C1484, C1478–C1494, C1496–C1509, C1525–C1538, C1532–C1547, C1549–C1561, C1567–C1583, C1575–C1592, C1594–C1607, C1612–C1625, C1619–C1634, C1636–C1655, C1662–C1675, C1669–C1684, C1686–C1705, C1712–C1726, C1720–C1735, C1737–C1754, C1763–C1776, C1770–C1786, C1788–C1806, C1813–C1829, C1821–C1838, C1840–C1859, C1866–C1880, C1873–C1889, C1891–C1910, C1917–C1930, C1924–C1939, C1941–C1960, C1967–C1980, C1974–C1989, C1991–C2010, C2018–C2031, C2025–C2040, C2042–C2061, C2072–C2088, C2080–C2097, C2099–C2111, C2117–C2131, C2125–C2140, C2142–C2159, C2166–C2180, C2174–C2189, C2191–C2207, C2214–C2228, C2222–C2237, C2239–C2257, C2264–C2278, C2272–C2287, C2289–C2307, C2314–C2327, C2321–C2336, C2338–C2357, C2364–C2377, C2371–C2386, C2388–C2407, C2413–C2425, C2419–C2435, C2437–C2454, C2460–C2474, C2468–C2483, and C2485–C2503. The segment at 2492 to 2521 is disordered; sequence RSPDSSQRGRVCEPPPPPSPPPRHPCQDPE. A compositionally biased stretch (pro residues) spans 2504 to 2515; sequence EPPPPPSPPPRH. 21 disulfide bridges follow: C2517–C2531, C2525–C2541, C2543–C2562, C2569–C2583, C2577–C2594, C2596–C2615, C2622–C2636, C2630–C2645, C2647–C2665, C2672–C2686, C2680–C2695, C2697–C2713, C2720–C2734, C2728–C2743, C2745–C2762, C2767–C2781, C2775–C2790, C2792–C2810, C2837–C2850, C2842–C2856, and C2858–C2871. Residues 2873-2999 form the SEA 1 domain; it reads EVQETPFELR…GSLRVASDTD (127 aa). N-linked (GlcNAc...) asparagine glycosylation occurs at N2944. Residues 3009-3048 form the EGF-like 47 domain; it reads EWGNCGGMSCKEHLKEVCIAGHICGCPDGMKRRDANSECR. Cystine bridges form between C3013/C3026, C3018/C3032, and C3034/C3047. Residues 3049–3174 enclose the SEA 2 domain; that stretch reads VVESWNVPLW…SELYLNPTQP (126 aa). 2 N-linked (GlcNAc...) asparagine glycosylation sites follow: N3120 and N3130. EGF-like domains follow at residues 3176–3220, 3224–3272, and 3272–3324; these read PFNP…KKCL, GFNE…SLCV, and VLDY…TLCM. 15 disulfides stabilise this stretch: C3180-C3191, C3185-C3201, C3203-C3219, C3228-C3242, C3236-C3251, C3253-C3271, C3276-C3288, C3282-C3297, C3299-C3323, C3332-C3345, C3339-C3354, C3356-C3372, C3377-C3386, C3380-C3397, and C3399-C3408. N3285 carries N-linked (GlcNAc...) asparagine glycosylation. Positions 3328-3373 constitute an EGF-like 51; calcium-binding domain; the sequence is DVDECALGLNNCSGVAHCIDRAVGYTCKCPDGYIDGNPDEPGRVCG. An N-linked (GlcNAc...) asparagine; atypical glycan is attached at N3337. N3338 is a glycosylation site (N-linked (GlcNAc...) asparagine). Residues 3373–3409 enclose the EGF-like 52 domain; the sequence is GALLCDLCNAHGDCVHNTATNNITCVCTDGWTGPQCQ. N-linked (GlcNAc...) asparagine glycosylation occurs at N3394. A glycan (N-linked (GlcNAc...) asparagine) is linked at N3414. A helical membrane pass occupies residues 3418–3438; the sequence is VLLILLALLFLLLTLCCLLYF. Residues 3439 to 3767 are Cytoplasmic-facing; sequence CTKCHCFKGR…SQTSTHVTKK (329 aa). Residues 3582-3729 form a disordered region; that stretch reads TTTTDEQGNT…EEDVEHSVGD (148 aa). A compositionally biased stretch (polar residues) spans 3588–3597; sequence QGNTIVTTTE. Positions 3630–3665 are enriched in low complexity; the sequence is QSQSQQQQSMSQGMSQSMSQHATSAGYSSSGMESSA. Positions 3675-3684 are enriched in basic and acidic residues; the sequence is HTGERERGGS. The span at 3690–3702 shows a compositional bias: low complexity; that stretch reads IGRARGMAAASSG.

In terms of tissue distribution, expressed in the hypodermis at the sites of muscle contact, in striated muscles including body wall muscles, the anal sphincter muscles and the junctions between the anal sphincter muscle and rectal cuticle. Also expressed in non-muscle cells including the excretory duct cell and pore cells.

It localises to the cell membrane. Its subcellular location is the cell junction. It is found in the hemidesmosome. Functionally, involved in cell adhesion and required for organ positioning and attachment. At the hypodermal surface, required for attachment of the hypdermermis to the basal cuticle in postembryonic development, possibly through intermediate filaments of the cytoskeleton. The protein is Transmembrane cell adhesion receptor mua-3 of Caenorhabditis elegans.